The chain runs to 83 residues: Exodeoxyribonuclease 7 small subunit (83 aa).

The segment at 1–25 (MQDELFETEKAPPKNAKNAPKKSFE) is disordered.

This sequence belongs to the XseB family. Heterooligomer composed of large and small subunits.

Its subcellular location is the cytoplasm. The catalysed reaction is Exonucleolytic cleavage in either 5'- to 3'- or 3'- to 5'-direction to yield nucleoside 5'-phosphates.. Its function is as follows. Bidirectionally degrades single-stranded DNA into large acid-insoluble oligonucleotides, which are then degraded further into small acid-soluble oligonucleotides. The chain is Exodeoxyribonuclease 7 small subunit from Helicobacter pylori (strain P12).